Consider the following 124-residue polypeptide: MATINQLVRKPRAKQVVKSNVPALEACPQKRGVCTRVYTTTPKKPNSALRKVCRVRLTNGFEVTSYIGGEGHNLQEHSVVLIRGGRVKDLPGVRYHTVRGALDCAGVNNRKQGRSKYGVKRPKS.

Position 89 is a 3-methylthioaspartic acid (Asp89).

This sequence belongs to the universal ribosomal protein uS12 family. Part of the 30S ribosomal subunit. Contacts proteins S8 and S17. May interact with IF1 in the 30S initiation complex.

With S4 and S5 plays an important role in translational accuracy. In terms of biological role, interacts with and stabilizes bases of the 16S rRNA that are involved in tRNA selection in the A site and with the mRNA backbone. Located at the interface of the 30S and 50S subunits, it traverses the body of the 30S subunit contacting proteins on the other side and probably holding the rRNA structure together. The combined cluster of proteins S8, S12 and S17 appears to hold together the shoulder and platform of the 30S subunit. This chain is Small ribosomal subunit protein uS12, found in Vibrio vulnificus (strain CMCP6).